The following is a 147-amino-acid chain: Ribosome-binding factor A (147 aa).

The segment at 127–147 is disordered; sequence AAEARHAGEPDPYKTDRDDAE.

It belongs to the RbfA family. In terms of assembly, monomer. Binds 30S ribosomal subunits, but not 50S ribosomal subunits or 70S ribosomes.

It is found in the cytoplasm. Functionally, one of several proteins that assist in the late maturation steps of the functional core of the 30S ribosomal subunit. Associates with free 30S ribosomal subunits (but not with 30S subunits that are part of 70S ribosomes or polysomes). Required for efficient processing of 16S rRNA. May interact with the 5'-terminal helix region of 16S rRNA. This is Ribosome-binding factor A from Nocardia farcinica (strain IFM 10152).